The primary structure comprises 413 residues: Imidazolonepropionase (413 aa).

2 residues coordinate Fe(3+): His-79 and His-81. Zn(2+) contacts are provided by His-79 and His-81. Residues Arg-88, Tyr-151, and His-184 each coordinate 4-imidazolone-5-propanoate. Tyr-151 contacts N-formimidoyl-L-glutamate. His-248 contributes to the Fe(3+) binding site. A Zn(2+)-binding site is contributed by His-248. Glu-251 contributes to the 4-imidazolone-5-propanoate binding site. Asp-322 contacts Fe(3+). A Zn(2+)-binding site is contributed by Asp-322. 2 residues coordinate N-formimidoyl-L-glutamate: Asn-324 and Gly-326. Ser-327 lines the 4-imidazolone-5-propanoate pocket.

It belongs to the metallo-dependent hydrolases superfamily. HutI family. It depends on Zn(2+) as a cofactor. Fe(3+) is required as a cofactor.

Its subcellular location is the cytoplasm. It carries out the reaction 4-imidazolone-5-propanoate + H2O = N-formimidoyl-L-glutamate. It participates in amino-acid degradation; L-histidine degradation into L-glutamate; N-formimidoyl-L-glutamate from L-histidine: step 3/3. Its function is as follows. Catalyzes the hydrolytic cleavage of the carbon-nitrogen bond in imidazolone-5-propanoate to yield N-formimidoyl-L-glutamate. It is the third step in the universal histidine degradation pathway. The chain is Imidazolonepropionase from Fusobacterium nucleatum subsp. nucleatum (strain ATCC 25586 / DSM 15643 / BCRC 10681 / CIP 101130 / JCM 8532 / KCTC 2640 / LMG 13131 / VPI 4355).